A 51-amino-acid polypeptide reads, in one-letter code: Magnetosome protein Mms5 (51 aa).

Residues 1 to 12 (MLSAKGVSLGLG) are Lumenal-facing. The interval 9–16 (LGLGLGLG) is LG region. Residues 13-33 (LGLGAWGPVLLGVVGVAGAIA) form a helical membrane-spanning segment. Residues 34–51 (LYGYYKNRNAEPAAAEAV) are Cytoplasmic-facing.

It belongs to the magnetosome MamD/Mms5 family. In terms of processing, seen in gels as a band of about 5 kDa, with an N-terminus that corresponds to residue 8, suggesting it may undergo N-terminal cleavage.

The protein resides in the magnetosome membrane. Its function is as follows. Might be involved in magnetite crystal growth. In Paramagnetospirillum magneticum (strain ATCC 700264 / AMB-1) (Magnetospirillum magneticum), this protein is Magnetosome protein Mms5.